We begin with the raw amino-acid sequence, 166 residues long: Endoribonuclease YbeY (166 aa).

The Zn(2+) site is built by His-132, His-136, and His-142.

The protein belongs to the endoribonuclease YbeY family. Zn(2+) serves as cofactor.

The protein localises to the cytoplasm. Functionally, single strand-specific metallo-endoribonuclease involved in late-stage 70S ribosome quality control and in maturation of the 3' terminus of the 16S rRNA. The protein is Endoribonuclease YbeY of Clostridium botulinum (strain Alaska E43 / Type E3).